The primary structure comprises 333 residues: Autoinducer 2 import system permease protein LsrD (333 aa).

The next 10 membrane-spanning stretches (helical) occupy residues 7–27, 45–65, 70–90, 91–111, 118–138, 162–182, 212–232, 240–260, 261–281, and 288–308; these read YGWEFALAALLIIEILLFGIA, ICIGIVALPLTMVIVSGGIDI, TIGLCAISLGVMNQTGIPMAA, AIPLTLLVGAICGIINAALIL, LVITLGTLYLFGGSALLLSGI, LFGLPMPLMLFLLCVLICWLF, TLYLLYSLTGIASAIAAIVLV, SDLGASFLMPAITAVVLGGAN, IYGGSGSIIGTALAILLIGYL, and AGVPSQVSSALAGALLIIAVV.

It belongs to the binding-protein-dependent transport system permease family. AraH/RbsC subfamily. The complex is composed of two ATP-binding proteins (LsrA), two transmembrane proteins (LsrC and LsrD) and a solute-binding protein (LsrB).

The protein resides in the cell inner membrane. In terms of biological role, part of the ABC transporter complex LsrABCD involved in autoinducer 2 (AI-2) import. Probably responsible for the translocation of the substrate across the membrane. This Photorhabdus laumondii subsp. laumondii (strain DSM 15139 / CIP 105565 / TT01) (Photorhabdus luminescens subsp. laumondii) protein is Autoinducer 2 import system permease protein LsrD (lsrD).